A 254-amino-acid chain; its full sequence is MKLPWLAADTPFPPVEQALRDPDGLLAAGADLSPERLAQAYAHGIFPWYAEGEPILWWSPDPRMVLACADFAPSHSLRKRLRALARTEHDPAARLQVRVDTAFARVLHECAAPRHGQPGTWISPAVQQAYRSWHAAGFVHSIETWIDGELAGGLYGVSLGRMFYGESMFARATDASKIALAHLVAFLRRHQVAWIDCQQQTGHLARLGARPVPRARFIEHIAHAVAQPRLPWRSGRLDSAGMLHPLPPANGVMM.

The protein belongs to the L/F-transferase family.

The protein localises to the cytoplasm. The catalysed reaction is N-terminal L-lysyl-[protein] + L-leucyl-tRNA(Leu) = N-terminal L-leucyl-L-lysyl-[protein] + tRNA(Leu) + H(+). It carries out the reaction N-terminal L-arginyl-[protein] + L-leucyl-tRNA(Leu) = N-terminal L-leucyl-L-arginyl-[protein] + tRNA(Leu) + H(+). It catalyses the reaction L-phenylalanyl-tRNA(Phe) + an N-terminal L-alpha-aminoacyl-[protein] = an N-terminal L-phenylalanyl-L-alpha-aminoacyl-[protein] + tRNA(Phe). Functions in the N-end rule pathway of protein degradation where it conjugates Leu, Phe and, less efficiently, Met from aminoacyl-tRNAs to the N-termini of proteins containing an N-terminal arginine or lysine. The polypeptide is Leucyl/phenylalanyl-tRNA--protein transferase (Bordetella bronchiseptica (strain ATCC BAA-588 / NCTC 13252 / RB50) (Alcaligenes bronchisepticus)).